We begin with the raw amino-acid sequence, 179 residues long: Replication restart protein DnaT (179 aa).

Residues 156 to 179 (GGLPKRDVNTVSEPDSQIPPGFRG) form a disordered region.

The protein belongs to the DnaT family. Homooligomerizes. Interacts with PriB. Component of the replication restart primosome. Primosome assembly occurs via a 'hand-off' mechanism. PriA binds to replication forks, subsequently PriB then DnaT bind; DnaT then displaces ssDNA to generate the helicase loading substrate.

In terms of biological role, involved in the restart of stalled replication forks, which reloads the replicative helicase on sites other than the origin of replication. Can function in multiple replication restart pathways. Displaces ssDNA from a PriB-ssDNA complex. Probably forms a spiral filament on ssDNA. The protein is Replication restart protein DnaT of Escherichia coli O81 (strain ED1a).